The following is a 459-amino-acid chain: Vicilin (459 aa).

The N-terminal stretch at 1–28 is a signal peptide; that stretch reads MAATTMKASFPLLMLMGISFLASVCVSS. A Cupin type-1 1 domain is found at 36–194; sequence FIFKSNKFQT…SFNTDYEEIE (159 aa). Disordered stretches follow at residues 235 to 258, 321 to 346, and 430 to 459; these read LSKN…NLRS, ELVG…QGEE, and ENQK…LSSV. Residues 238-251 are compositionally biased toward low complexity; sequence NAKSTSKKSVSSES. The 173-residue stretch at 254 to 426 folds into the Cupin type-1 2 domain; sequence FNLRSRGPIY…AFPGSAQEVD (173 aa). Residues 337 to 346 are compositionally biased toward acidic residues; it reads DDEEEEQGEE. Positions 444 to 459 are enriched in basic and acidic residues; it reads QRERGSRETRDRLSSV.

It belongs to the 7S seed storage protein family.

The protein resides in the vacuole. Its subcellular location is the aleurone grain. Seed storage protein. In Pisum sativum (Garden pea), this protein is Vicilin.